A 168-amino-acid polypeptide reads, in one-letter code: Transcription antitermination protein NusB (168 aa).

This sequence belongs to the NusB family.

Involved in transcription antitermination. Required for transcription of ribosomal RNA (rRNA) genes. Binds specifically to the boxA antiterminator sequence of the ribosomal RNA (rrn) operons. The sequence is that of Transcription antitermination protein NusB from Chlamydia trachomatis serovar L2 (strain ATCC VR-902B / DSM 19102 / 434/Bu).